Consider the following 213-residue polypeptide: MATAKPILYGAWISSCSHRVRIALNLKGVDYEYKAVNPRTDPDYEKINPIKYIPALVDGDFVLSDSLAIMLYLEDKYPQHPLVPKDIKTKGLDLQIANIVCSSIQPLQGYGVIGLHEGRLSPDESLEVVQRYIDKGFRAIEKLLDGCDSKYCVGDEVHLGDVCLAPQIHAAINRFQIDMTKYPILSRLHDAYMKIPAFQAALPQNQPDAPSAK.

The 78-residue stretch at 4–81 folds into the GST N-terminal domain; sequence AKPILYGAWI…YLEDKYPQHP (78 aa). In terms of domain architecture, GST C-terminal spans 86 to 211; that stretch reads DIKTKGLDLQ…LPQNQPDAPS (126 aa).

It belongs to the GST superfamily. Zeta family.

Its subcellular location is the cytoplasm. The enzyme catalyses RX + glutathione = an S-substituted glutathione + a halide anion + H(+). Functionally, has a glutathione transferase activity with ethacrynic acid and nitrophenyl acetate. Has low glutathione peroxidase activity with cumene hydroperoxide. The chain is Glutathione S-transferase (GSTZ1) from Triticum aestivum (Wheat).